Here is a 1503-residue protein sequence, read N- to C-terminus: EF-hand calcium-binding domain-containing protein 5 (1503 aa).

Positions 1-23 (MNESASQEELRPAQENRKEDKER) are disordered. A compositionally biased stretch (basic and acidic residues) spans 8–23 (EELRPAQENRKEDKER). Ser-77 is modified (phosphoserine). Disordered stretches follow at residues 477–518 (ASKT…EQGP), 544–656 (IEPG…QGPY), and 730–750 (FPET…KSQK). A compositionally biased stretch (polar residues) spans 549-561 (HTESTLEQGSSRR). 2 stretches are compositionally biased toward basic and acidic residues: residues 562 to 582 (LLTE…HKGS) and 607 to 622 (GSRR…HKGS). The EF-hand domain occupies 869–904 (RQRLLLEAIFQKWDSDGSGFLDLKEVDELLYTYKEG). Residues Asp-882, Asp-884, Ser-886, and Glu-893 each coordinate Ca(2+).

The sequence is that of EF-hand calcium-binding domain-containing protein 5 (EFCAB5) from Homo sapiens (Human).